The primary structure comprises 259 residues: MLDWNPALYRRYEDERTRPAQELLARVPLPEAARVVDLGCGPGNSTELLANRFPTAKVVGTDNSEAMLASARERLPQARFELSDIATWAPQDQAPDLIYANAALQWVPDHEQLIPRLFAALAPGGVLAIQMPDNREEPTHRLMRAVAAEAPWAEPIGNADRLRTLLLPLGGYYDLLAPAAARVDVWHTIYQHPMADAAAIVEWVRGTGLKPFVDRLPADLQASYLAEYERRVDQAYPVRTDGKRLLAFPRMFIVAQKKA.

This sequence belongs to the methyltransferase superfamily. Tam family.

Its subcellular location is the cytoplasm. The enzyme catalyses trans-aconitate + S-adenosyl-L-methionine = (E)-3-(methoxycarbonyl)pent-2-enedioate + S-adenosyl-L-homocysteine. Functionally, catalyzes the S-adenosylmethionine monomethyl esterification of trans-aconitate. This is Trans-aconitate 2-methyltransferase from Variovorax paradoxus (strain S110).